The sequence spans 235 residues: Ribonuclease 3 (235 aa).

In terms of domain architecture, RNase III spans 6-131; sequence IDQLERLTEH…LIAVMYLDGG (126 aa). Glu44 is a binding site for Mg(2+). Asp48 is an active-site residue. Asp117 and Glu120 together coordinate Mg(2+). Residue Glu120 is part of the active site. One can recognise a DRBM domain in the interval 156–225; that stretch reads DAKTELQEWA…AEKVLRREGI (70 aa).

It belongs to the ribonuclease III family. As to quaternary structure, homodimer. It depends on Mg(2+) as a cofactor.

Its subcellular location is the cytoplasm. It catalyses the reaction Endonucleolytic cleavage to 5'-phosphomonoester.. In terms of biological role, digests double-stranded RNA. Involved in the processing of primary rRNA transcript to yield the immediate precursors to the large and small rRNAs (23S and 16S). Processes some mRNAs, and tRNAs when they are encoded in the rRNA operon. Processes pre-crRNA and tracrRNA of type II CRISPR loci if present in the organism. The chain is Ribonuclease 3 from Bartonella quintana (strain Toulouse) (Rochalimaea quintana).